A 263-amino-acid chain; its full sequence is ATP synthase subunit delta (263 aa).

The protein belongs to the ATPase delta chain family. F-type ATPases have 2 components, F(1) - the catalytic core - and F(0) - the membrane proton channel. F(1) has five subunits: alpha(3), beta(3), gamma(1), delta(1), epsilon(1). F(0) has three main subunits: a(1), b(2) and c(10-14). The alpha and beta chains form an alternating ring which encloses part of the gamma chain. F(1) is attached to F(0) by a central stalk formed by the gamma and epsilon chains, while a peripheral stalk is formed by the delta and b chains.

Its subcellular location is the cell membrane. In terms of biological role, f(1)F(0) ATP synthase produces ATP from ADP in the presence of a proton or sodium gradient. F-type ATPases consist of two structural domains, F(1) containing the extramembraneous catalytic core and F(0) containing the membrane proton channel, linked together by a central stalk and a peripheral stalk. During catalysis, ATP synthesis in the catalytic domain of F(1) is coupled via a rotary mechanism of the central stalk subunits to proton translocation. This protein is part of the stalk that links CF(0) to CF(1). It either transmits conformational changes from CF(0) to CF(1) or is implicated in proton conduction. In Cutibacterium acnes (strain DSM 16379 / KPA171202) (Propionibacterium acnes), this protein is ATP synthase subunit delta.